The sequence spans 837 residues: Thioredoxin domain-containing protein 3 homolog (837 aa).

Residues 6–115 (EQIQLQKEIL…LKNVERELKQ (110 aa)) form the Thioredoxin domain. Cysteines 39 and 42 form a disulfide. 3 NDK regions span residues 201–345 (KEVT…SVPI), 355–491 (IEKT…FPKQ), and 493–629 (TLAV…EVLP). A disordered region spans residues 633-837 (VKDSVASISM…EEKTEEQTAS (205 aa)). The span at 638–647 (ASISMEQSQV) shows a compositional bias: polar residues. Over residues 652 to 670 (EEGGEEQTEQPAGEGEEQQ) the composition is skewed to acidic residues. Low complexity-rich tracts occupy residues 671-707 (AEQP…PPAE), 718-752 (QQTQ…AEQT), and 766-787 (APAT…QQTQ). Gly residues predominate over residues 805–819 (AGGGEEAVATEGGGE). Residues 820-837 (GDAKPEGGEEKTEEQTAS) show a composition bias toward basic and acidic residues.

It in the C-terminal section; belongs to the NDK family. As to quaternary structure, monomer. In terms of tissue distribution, testis-specific. In sperm, it is a component of the arm dynein of sperm axoneme.

Functionally, probably required during the final stages of sperm tail maturation in the testis and/or epididymis, where extensive disulfide bonding of fibrous sheath (FS) proteins occurs. In vitro, it has neither nucleoside diphosphate kinase (NDPK) activity nor reducing activity on disulfide bonds. Exhibits a 3'-5' exonuclease activity with a preference for single-stranded DNA, suggesting roles in DNA proofreading and repair. The polypeptide is Thioredoxin domain-containing protein 3 homolog (NME8) (Heliocidaris crassispina (Sea urchin)).